We begin with the raw amino-acid sequence, 875 residues long: Translation initiation factor IF-2 (875 aa).

Disordered stretches follow at residues 1-20 (MSDSDKKPTLGRRPLGLKTA), 47-102 (LMGR…LREA), and 126-246 (EEER…DRRG). The segment covering 54 to 66 (AAPTAAPAAAATP) has biased composition (low complexity). Pro residues predominate over residues 67-85 (APTPVAPPPPPPPPPPPPS). Basic and acidic residues-rich tracts occupy residues 88 to 102 (RETRQEMQVRLLREA) and 126 to 140 (EEERRRAEEKARAEA). 2 stretches are compositionally biased toward low complexity: residues 141-195 (EAAA…PAAP) and 202-221 (PAAPAVPAPRRFTPVAPAAP). The span at 223-246 (KRPELAAKKPAHPQRDRKTEDRRG) shows a compositional bias: basic and acidic residues. The tr-type G domain occupies 374–544 (ARPPVVTIMG…LLQAELLELK (171 aa)). The G1 stretch occupies residues 383–390 (GHVDHGKT). 383 to 390 (GHVDHGKT) provides a ligand contact to GTP. Residues 408 to 412 (GITQH) form a G2 region. The G3 stretch occupies residues 430–433 (DTPG). Residues 430 to 434 (DTPGH) and 484 to 487 (TKAD) contribute to the GTP site. Residues 484 to 487 (TKAD) form a G4 region. The G5 stretch occupies residues 520–522 (SAK).

The protein belongs to the TRAFAC class translation factor GTPase superfamily. Classic translation factor GTPase family. IF-2 subfamily.

It localises to the cytoplasm. In terms of biological role, one of the essential components for the initiation of protein synthesis. Protects formylmethionyl-tRNA from spontaneous hydrolysis and promotes its binding to the 30S ribosomal subunits. Also involved in the hydrolysis of GTP during the formation of the 70S ribosomal complex. In Novosphingobium aromaticivorans (strain ATCC 700278 / DSM 12444 / CCUG 56034 / CIP 105152 / NBRC 16084 / F199), this protein is Translation initiation factor IF-2.